A 504-amino-acid chain; its full sequence is Arabinose import ATP-binding protein AraG (504 aa).

2 consecutive ABC transporter domains span residues 8-243 (LSFR…MVGR) and 256-499 (YGEE…MPKV). 40 to 47 (GENGAGKS) provides a ligand contact to ATP.

It belongs to the ABC transporter superfamily. Arabinose importer (TC 3.A.1.2.2) family. In terms of assembly, the complex is composed of two ATP-binding proteins (AraG), two transmembrane proteins (AraH) and a solute-binding protein (AraF).

It is found in the cell inner membrane. The enzyme catalyses L-arabinose(out) + ATP + H2O = L-arabinose(in) + ADP + phosphate + H(+). Its function is as follows. Part of the ABC transporter complex AraFGH involved in arabinose import. Responsible for energy coupling to the transport system. This is Arabinose import ATP-binding protein AraG from Escherichia coli (strain UTI89 / UPEC).